A 348-amino-acid chain; its full sequence is Noscapine synthase SDR1 (348 aa).

This sequence belongs to the NAD(P)-dependent epimerase/dehydratase family.

It catalyses the reaction narcotine hemiacetal + NAD(+) = noscapine + NADH + H(+). It participates in alkaloid biosynthesis. Oxidoreductase that catalyzes the last step in the biosynthesis of the benzylisoquinoline alkaloid noscapine. Converts narcotine hemiacetal to noscapine. The sequence is that of Noscapine synthase SDR1 from Papaver somniferum (Opium poppy).